Here is a 359-residue protein sequence, read N- to C-terminus: Peptide chain release factor 1 (359 aa).

Residue glutamine 236 is modified to N5-methylglutamine.

The protein belongs to the prokaryotic/mitochondrial release factor family. Post-translationally, methylated by PrmC. Methylation increases the termination efficiency of RF1.

Its subcellular location is the cytoplasm. In terms of biological role, peptide chain release factor 1 directs the termination of translation in response to the peptide chain termination codons UAG and UAA. This Streptococcus pneumoniae (strain Hungary19A-6) protein is Peptide chain release factor 1.